A 360-amino-acid chain; its full sequence is NADH-quinone oxidoreductase subunit H (360 aa).

The next 8 helical transmembrane spans lie at 22-42, 97-117, 130-150, 170-190, 208-228, 255-275, 292-312, and 336-356; these read ITVG…IPLI, ALFY…WAVI, IGLL…IIAG, ISYE…SGSM, VFSW…ISAV, GFAF…IAAL, WGFI…AVLY, and VLIP…ISPL.

Belongs to the complex I subunit 1 family. NDH-1 is composed of 14 different subunits. Subunits NuoA, H, J, K, L, M, N constitute the membrane sector of the complex.

The protein localises to the cell inner membrane. It catalyses the reaction a quinone + NADH + 5 H(+)(in) = a quinol + NAD(+) + 4 H(+)(out). In terms of biological role, NDH-1 shuttles electrons from NADH, via FMN and iron-sulfur (Fe-S) centers, to quinones in the respiratory chain. The immediate electron acceptor for the enzyme in this species is believed to be ubiquinone. Couples the redox reaction to proton translocation (for every two electrons transferred, four hydrogen ions are translocated across the cytoplasmic membrane), and thus conserves the redox energy in a proton gradient. This subunit may bind ubiquinone. In Neisseria meningitidis serogroup C / serotype 2a (strain ATCC 700532 / DSM 15464 / FAM18), this protein is NADH-quinone oxidoreductase subunit H.